Here is a 344-residue protein sequence, read N- to C-terminus: Putative esterase NocK (344 aa).

The segment at residues 1–34 (MIGVTRRSGLALAVLVSSAACAGAEPVAPPPAPA) is a signal peptide (tat-type signal). Residues 265-295 (GGADERRREEARPAAAPGGTSTSRETCANPD) are disordered. Positions 266 to 276 (GADERRREEAR) are enriched in basic and acidic residues.

Belongs to the AB hydrolase superfamily. Predicted to be exported by the Tat system. The position of the signal peptide cleavage has not been experimentally proven.

The chain is Putative esterase NocK from Nocardia uniformis subsp. tsuyamanensis.